We begin with the raw amino-acid sequence, 488 residues long: Ribulose bisphosphate carboxylase large chain (488 aa).

The substrate site is built by asparagine 127 and threonine 177. Lysine 179 (proton acceptor) is an active-site residue. A substrate-binding site is contributed by lysine 181. Mg(2+) contacts are provided by lysine 205, aspartate 207, and glutamate 208. Lysine 205 bears the N6-carboxylysine mark. The Proton acceptor role is filled by histidine 297. Positions 298, 330, and 382 each coordinate substrate.

This sequence belongs to the RuBisCO large chain family. Type I subfamily. Heterohexadecamer of 8 large chains and 8 small chains. Mg(2+) is required as a cofactor.

The protein localises to the plastid. Its subcellular location is the chloroplast. The enzyme catalyses 2 (2R)-3-phosphoglycerate + 2 H(+) = D-ribulose 1,5-bisphosphate + CO2 + H2O. It carries out the reaction D-ribulose 1,5-bisphosphate + O2 = 2-phosphoglycolate + (2R)-3-phosphoglycerate + 2 H(+). Its function is as follows. RuBisCO catalyzes two reactions: the carboxylation of D-ribulose 1,5-bisphosphate, the primary event in carbon dioxide fixation, as well as the oxidative fragmentation of the pentose substrate in the photorespiration process. Both reactions occur simultaneously and in competition at the same active site. The sequence is that of Ribulose bisphosphate carboxylase large chain from Pyropia yezoensis (Susabi-nori).